The sequence spans 827 residues: MQEHYDFKEIEKKWQEDWNKENTYQVPDFSERPKYYCLEMFPYPSGKLHMGHVRNYSIGDVVARFKTMQGYDVLHPMGWDAFGLPAENAAIKHGIAPATWTWDNIAHMRSQLKQLGLSYDWNREVATCHTEYYKWGQWLFLQLYKKGLCYKKHARVNWCPDCATVLANEQVVDGACERCSAVVEQKELDQWFFRITEYAQRLLNDLKLLKGWPDKVKIMQENWIGRSEGAELTFQVEGSDESITVFTTRPDTVYGVSYMVLAPEHPLVAKLIAGRPQEAEVIGFVNRVNKLTELDRTSSDKEGVFTGAYCINPFDGARVPILIANYVLYHYGTGAVMGVPAHDERDFEFAHKYNLPIKVVIYPAQDKEIRVEDMKEAYTADGIMVHSGPFDGSPNRQGIKKVIKYAEEKGIGKGIVNYRLRDWLISRQRYWGTPIPIVYCEKCGTVPVPEDQLPVILPTDVAFKPTGESPLKGRPDFVHTTCPQCGGPAQRETDTMDTFVDSSWYYLRYTSSRDTEYAWDKNKADRWMNVDQYIGGVEHAILHLLYSRFFTKVFYDLGLVNVQEPFENLLTQGMVLKDGSKMSKSKGNVVSPEEIIDRYGADTARMFILFAAPPERDLEWSDRGVEGSHRFLNRVWRLVYSLKDEVAGAPAISSVNAYVGVHKEMRRLTHYAIKKVTEDVSGRFNFNTAISTIMELVNGIYTYRDKVAAVERDTAVLAEAVNSTIILLAPFAPHIAEELWSATGHQGSVHKQPWLTFDSAALVEDEVEVAVQINGKVRERLNIPANMKPAEMQQYLMDMESVKILIGDKQIVKIIPVPGKLLNIVVK.

Residues 42-52 (PYPSGKLHMGH) carry the 'HIGH' region motif. Positions 581–585 (KMSKS) match the 'KMSKS' region motif. Residue lysine 584 participates in ATP binding.

This sequence belongs to the class-I aminoacyl-tRNA synthetase family.

The protein resides in the cytoplasm. It catalyses the reaction tRNA(Leu) + L-leucine + ATP = L-leucyl-tRNA(Leu) + AMP + diphosphate. This is Leucine--tRNA ligase from Desulforamulus reducens (strain ATCC BAA-1160 / DSM 100696 / MI-1) (Desulfotomaculum reducens).